The chain runs to 516 residues: Probable fucosyltransferase 8 (516 aa).

Residues 5-25 form a helical; Signal-anchor for type II membrane protein membrane-spanning segment; that stretch reads ITVVTCLFLLSVMQLSFFNIF. Over 26-516 the chain is Lumenal; that stretch reads NYQLLDATTN…ITGLKLVDSN (491 aa). 5 N-linked (GlcNAc...) asparagine glycosylation sites follow: asparagine 35, asparagine 116, asparagine 211, asparagine 362, and asparagine 463.

This sequence belongs to the glycosyltransferase 37 family. As to expression, expressed in leaves and stems.

The protein resides in the golgi apparatus. It is found in the golgi stack membrane. Its pathway is protein modification; protein glycosylation. Its function is as follows. May be involved in cell wall biosynthesis. May act as a fucosyltransferase. The chain is Probable fucosyltransferase 8 (FUT8) from Arabidopsis thaliana (Mouse-ear cress).